Here is a 308-residue protein sequence, read N- to C-terminus: Protein translocase subunit SecF (308 aa).

6 helical membrane passes run 23-42 (VSYS…IGIY), 140-160 (IEAG…YIGV), 164-184 (WYFG…ALGF), 194-214 (LSTI…SVVI), 246-266 (ILTV…GGKA), and 272-292 (VLVF…SAPI).

It belongs to the SecD/SecF family. SecF subfamily. As to quaternary structure, forms a complex with SecD. Part of the essential Sec protein translocation apparatus which comprises SecA, SecYEG and auxiliary proteins SecDF-YajC and YidC.

Its subcellular location is the cell inner membrane. In terms of biological role, part of the Sec protein translocase complex. Interacts with the SecYEG preprotein conducting channel. SecDF uses the proton motive force (PMF) to complete protein translocation after the ATP-dependent function of SecA. This Rickettsia typhi (strain ATCC VR-144 / Wilmington) protein is Protein translocase subunit SecF.